The sequence spans 107 residues: Essential MCU regulator, mitochondrial (107 aa).

Residues 1–52 (MASGAARWLVLAPVRSGALRSGPSLRKDGDVSAAWSGSGRSLVPSRSVIVTR) constitute a mitochondrion transit peptide. An interaction with MAIP1 region spans residues 1–52 (MASGAARWLVLAPVRSGALRSGPSLRKDGDVSAAWSGSGRSLVPSRSVIVTR). Topologically, residues 54 to 65 (GAILPKPVKMSF) are mitochondrial matrix. A helical transmembrane segment spans residues 66–85 (GLLRVFSIVIPFLYVGTLIS). Positions 81–85 (GTLIS) match the GXXXX[G/A/S] motif. Over 86–107 (KNFAALLEEHDIFVPEDDDDDD) the chain is Mitochondrial intermembrane.

It belongs to the SMDT1/EMRE family. As to quaternary structure, component of the uniplex complex, composed of MCU, EMRE/SMDT1, MICU1 and MICU2 (or MICU3) in a 4:4:1:1 stoichiometry. The number of EMRE/SMDT1 molecules is hovewer variable, ranging from 1 to 4 copies per uniplex complex, leading to uniplex complexes with distinct gatekeeping profiles. Interacts (via its C-terminal poly-Asp tail) with MCUR1; the interaction is direct. Unprocessed form interacts (via transit peptide) with MAIP1. Post-translationally, undergoes proteolytic degradation in neurons: degraded by AFG3L2 and SPG7 before SMDT1/EMRE assembly with the uniporter complex, limiting the availability of SMDT1/EMRE for MCU assembly and promoting efficient assembly of gatekeeper subunits with MCU.

Its subcellular location is the mitochondrion inner membrane. In terms of biological role, essential regulatory subunit of the mitochondrial calcium uniporter complex (uniplex), a complex that mediates calcium uptake into mitochondria. Required to bridge the calcium-sensing proteins MICU1 with the calcium-conducting subunit MCU. Acts by mediating activation of MCU and retention of MICU1 to the MCU pore, in order to ensure tight regulation of the uniplex complex and appropriate responses to intracellular calcium signaling. The protein is Essential MCU regulator, mitochondrial of Homo sapiens (Human).